The sequence spans 263 residues: Metaxin-2 (263 aa).

At Ser-2 the chain carries N-acetylserine.

This sequence belongs to the metaxin family. As to quaternary structure, interacts with MTX1/metaxin-1. Associates with the mitochondrial contact site and cristae organizing system (MICOS) complex, composed of at least MICOS10/MIC10, CHCHD3/MIC19, CHCHD6/MIC25, APOOL/MIC27, IMMT/MIC60, APOO/MIC23/MIC26 and QIL1/MIC13. This complex was also known under the names MINOS or MitOS complex. The MICOS complex associates with mitochondrial outer membrane proteins SAMM50, MTX1 and MTX2 (together described as components of the mitochondrial outer membrane sorting assembly machinery (SAM) complex) and DNAJC11, mitochondrial inner membrane protein TMEM11 and with HSPA9. The MICOS and SAM complexes together with DNAJC11 are part of a large protein complex spanning both membranes termed the mitochondrial intermembrane space bridging (MIB) complex.

It localises to the mitochondrion outer membrane. The protein localises to the mitochondrion. Its function is as follows. Involved in transport of proteins into the mitochondrion. The polypeptide is Metaxin-2 (MTX2) (Homo sapiens (Human)).